Here is a 985-residue protein sequence, read N- to C-terminus: Bifunctional glutamine synthetase adenylyltransferase/adenylyl-removing enzyme (985 aa).

Positions 1-460 (MSLPSLADFP…HFRQVIADPD (460 aa)) are adenylyl removase. The segment at 476-985 (GGEWLPLWEE…MRIWAQMGLS (510 aa)) is adenylyl transferase.

The protein belongs to the GlnE family. The cofactor is Mg(2+).

It carries out the reaction [glutamine synthetase]-O(4)-(5'-adenylyl)-L-tyrosine + phosphate = [glutamine synthetase]-L-tyrosine + ADP. The catalysed reaction is [glutamine synthetase]-L-tyrosine + ATP = [glutamine synthetase]-O(4)-(5'-adenylyl)-L-tyrosine + diphosphate. Involved in the regulation of glutamine synthetase GlnA, a key enzyme in the process to assimilate ammonia. When cellular nitrogen levels are high, the C-terminal adenylyl transferase (AT) inactivates GlnA by covalent transfer of an adenylyl group from ATP to specific tyrosine residue of GlnA, thus reducing its activity. Conversely, when nitrogen levels are low, the N-terminal adenylyl removase (AR) activates GlnA by removing the adenylyl group by phosphorolysis, increasing its activity. The regulatory region of GlnE binds the signal transduction protein PII (GlnB) which indicates the nitrogen status of the cell. This Pseudomonas syringae pv. tomato (strain ATCC BAA-871 / DC3000) protein is Bifunctional glutamine synthetase adenylyltransferase/adenylyl-removing enzyme.